Consider the following 514-residue polypeptide: 2,3-bisphosphoglycerate-independent phosphoglycerate mutase (514 aa).

Residues Asp14 and Ser64 each contribute to the Mn(2+) site. Residue Ser64 is the Phosphoserine intermediate of the active site. Substrate contacts are provided by residues His125, 155-156 (RD), Arg187, Arg193, 263-266 (RADR), and Lys336. Residues Asp403, His407, Asp444, His445, and His463 each coordinate Mn(2+).

The protein belongs to the BPG-independent phosphoglycerate mutase family. Monomer. It depends on Mn(2+) as a cofactor.

The enzyme catalyses (2R)-2-phosphoglycerate = (2R)-3-phosphoglycerate. Its pathway is carbohydrate degradation; glycolysis; pyruvate from D-glyceraldehyde 3-phosphate: step 3/5. Functionally, catalyzes the interconversion of 2-phosphoglycerate and 3-phosphoglycerate. This chain is 2,3-bisphosphoglycerate-independent phosphoglycerate mutase, found in Shewanella denitrificans (strain OS217 / ATCC BAA-1090 / DSM 15013).